We begin with the raw amino-acid sequence, 182 residues long: UPF0301 protein CHU_1773 (182 aa).

Belongs to the UPF0301 (AlgH) family.

In Cytophaga hutchinsonii (strain ATCC 33406 / DSM 1761 / CIP 103989 / NBRC 15051 / NCIMB 9469 / D465), this protein is UPF0301 protein CHU_1773.